Consider the following 571-residue polypeptide: MNMNQVAEYVETDPTGRYGRFAEILGRGAMKTVYKAIDEKLGIEVAWSQVKLKEVLRSSVDLQRLYSEVHLLSTLNHKSIIRFYTSWIDVHNHTLNFITELFTSGTLRQYKNKYLRIDIRAIKSWARQILEGLVYLHEHDPPVIHRDLKCDNIFVNGHLGQVKIGDLGLARMLRDCHSAHSIIGTPEFMAPELYEENYNELIDVYSFGMCFLEMITSEFPYSECNHPAQIYKKVVGGKLPGAFYRVGDIEAQRFIGKCLVSASKRVSAKELLQDPFLASDESWMVYTSGAGNPKPFLNENEMDTLKLEDDELRTEMSIAGKLGAEDNKIDLEVQIAYDNGLANNVFFPFDIMNDTSIDVAKEMVKELEIIDWEPVEIAKMIDGAISSLVSDWKYEEDDETPHDHHRHRTDSFHSSSSHASSSQASLSNYMARGLQDWVQDDLHDETYSQSSSHSGSYSNLNYIAVDEYSSQSPVMSRTHNMTRFCPEESSHLQSGQANAYAASSSTNRSLASDNRTLTRNRSLVDVQRQLLHRSPGEEARKRRLFKTVGDVETVGFQSPYAVSRKPPSSRR.

The region spanning 19-277 (GRFAEILGRG…AKELLQDPFL (259 aa)) is the Protein kinase domain. ATP-binding positions include 99–102 (TELF) and Lys149. Asp166 functions as the Proton acceptor in the catalytic mechanism. The tract at residues 396–425 (EDDETPHDHHRHRTDSFHSSSSHASSSQAS) is disordered. Residues 412–425 (FHSSSSHASSSQAS) are compositionally biased toward low complexity. The residue at position 522 (Ser522) is a Phosphoserine.

Belongs to the protein kinase superfamily. Ser/Thr protein kinase family. WNK subfamily.

It catalyses the reaction L-seryl-[protein] + ATP = O-phospho-L-seryl-[protein] + ADP + H(+). The enzyme catalyses L-threonyl-[protein] + ATP = O-phospho-L-threonyl-[protein] + ADP + H(+). May regulate flowering time by modulating the photoperiod pathway. This is Probable serine/threonine-protein kinase WNK4 (WNK4) from Arabidopsis thaliana (Mouse-ear cress).